The chain runs to 303 residues: Taste receptor type 2 member 13 (303 aa).

The Extracellular portion of the chain corresponds to Met1–Ser7. A helical transmembrane segment spans residues Ile8–Val28. Over Leu29–Arg55 the chain is Cytoplasmic. The chain crosses the membrane as a helical span at residues Ile56 to Phe76. At Val77–Met85 the chain is on the extracellular side. Residues Ile86–Phe106 traverse the membrane as a helical segment. Topologically, residues Tyr107–Lys128 are cytoplasmic. A helical membrane pass occupies residues Val129–Asn149. Over Met150–Thr184 the chain is Extracellular. Residues Asn162 and Asn166 are each glycosylated (N-linked (GlcNAc...) asparagine). A helical membrane pass occupies residues Met185 to Leu205. At Gln206–Lys232 the chain is on the cytoplasmic side. The helical transmembrane segment at Ile233–Ile253 threads the bilayer. Topologically, residues Ser254–Val261 are extracellular. A helical transmembrane segment spans residues Ile262 to Ile282. Over Leu283–Arg303 the chain is Cytoplasmic.

The protein belongs to the G-protein coupled receptor T2R family. In terms of tissue distribution, expressed in subsets of taste receptor cells of the tongue and palate epithelium and exclusively in gustducin-positive cells.

The protein localises to the membrane. In terms of biological role, receptor that may play a role in the perception of bitterness and is gustducin-linked. May play a role in sensing the chemical composition of the gastrointestinal content. The activity of this receptor may stimulate alpha gustducin, mediate PLC-beta-2 activation and lead to the gating of TRPM5. In Homo sapiens (Human), this protein is Taste receptor type 2 member 13 (TAS2R13).